The primary structure comprises 837 residues: Putative dimethyl sulfoxide reductase catalytic subunit A (837 aa).

The segment at residues 1–36 (MSDTDLNATRRDVLKSGAVAAVGLSGGGLLSTLQEA) is a signal peptide (tat-type signal). Residues 53-110 (DQVVKTACSPNCRGKCPLDVFVRDGQIKKVEQQVPAAKTFKRGCTLGMTHLQRVYNAD) form the 4Fe-4S Mo/W bis-MGD-type domain. [4Fe-4S] cluster contacts are provided by cysteine 60, cysteine 64, cysteine 68, and cysteine 96. Position 200 (asparagine 200) interacts with Mo-bis(molybdopterin guanine dinucleotide). The interval 813 to 837 (EHQSNEYTQHNPRGSSGTATDGDSS) is disordered. The span at 826-837 (GSSGTATDGDSS) shows a compositional bias: low complexity.

This sequence belongs to the prokaryotic molybdopterin-containing oxidoreductase family. As to quaternary structure, probable multiprotein complex that likely consists of DmsA, DmsB and DmsC. Mo-bis(molybdopterin guanine dinucleotide) is required as a cofactor. The cofactor is [4Fe-4S] cluster. Post-translationally, predicted to be exported by the Tat system. The position of the signal peptide cleavage has not been experimentally proven.

It is found in the cell membrane. The enzyme catalyses dimethyl sulfide + a menaquinone + H2O = dimethyl sulfoxide + a menaquinol. In terms of biological role, dimethyl sulfoxide (DMSO) reductase catalyzes the reduction of dimethyl sulfoxide (DMSO) to dimethyl sulfide (DMS) during anaerobic respiration; it can also use trimethylamine N-oxide (TMAO) as terminal electron acceptor. Required for anaerobic respiration on DMSO and TMAO; subunit A is proposed to be catalytically active. The protein is Putative dimethyl sulfoxide reductase catalytic subunit A (dmsA) of Halobacterium salinarum (strain ATCC 700922 / JCM 11081 / NRC-1) (Halobacterium halobium).